Here is a 156-residue protein sequence, read N- to C-terminus: Ribosome maturation factor RimP (156 aa).

The protein belongs to the RimP family.

The protein localises to the cytoplasm. Its function is as follows. Required for maturation of 30S ribosomal subunits. The polypeptide is Ribosome maturation factor RimP (Lachnospira eligens (strain ATCC 27750 / DSM 3376 / VPI C15-48 / C15-B4) (Eubacterium eligens)).